The sequence spans 225 residues: Cytidylate kinase (225 aa).

Residue 11 to 19 (GPAAAGKST) participates in ATP binding.

It belongs to the cytidylate kinase family. Type 1 subfamily.

Its subcellular location is the cytoplasm. The catalysed reaction is CMP + ATP = CDP + ADP. The enzyme catalyses dCMP + ATP = dCDP + ADP. This Bacillus pumilus (strain SAFR-032) protein is Cytidylate kinase.